The primary structure comprises 333 residues: Adenosine deaminase (333 aa).

Zn(2+) is bound by residues H12 and H14. Positions 14, 16, and 170 each coordinate substrate. H197 contacts Zn(2+). The active-site Proton donor is the E200. D278 provides a ligand contact to Zn(2+). A substrate-binding site is contributed by D279.

Belongs to the metallo-dependent hydrolases superfamily. Adenosine and AMP deaminases family. Adenosine deaminase subfamily. It depends on Zn(2+) as a cofactor.

It catalyses the reaction adenosine + H2O + H(+) = inosine + NH4(+). The enzyme catalyses 2'-deoxyadenosine + H2O + H(+) = 2'-deoxyinosine + NH4(+). Catalyzes the hydrolytic deamination of adenosine and 2-deoxyadenosine. This Escherichia coli (strain SMS-3-5 / SECEC) protein is Adenosine deaminase.